Reading from the N-terminus, the 398-residue chain is Cytochrome b561 and DOMON domain-containing protein At3g61750 (398 aa).

A signal peptide spans 1-23 (MKTLVGFYILCFLIGQDLPFLAA). In terms of domain architecture, DOMON spans 64–177 (NTFVLRYSEN…PRRAVILAFS (114 aa)). The 194-residue stretch at 184–377 (LGRLTKHDDK…LEIFRIRGTI (194 aa)) folds into the Cytochrome b561 domain. H220 is a heme b binding site. 2 consecutive transmembrane segments (helical) span residues 222–242 (VMAI…ARYL) and 252–272 (LHIG…ILGI). 2 residues coordinate heme b: H253 and H285. A run of 3 helical transmembrane segments spans residues 287–307 (GIGI…FARP), 320–340 (YHHW…VLGI), and 351–371 (KIGY…LEIF). H321 is a binding site for heme b.

Requires heme b as cofactor.

The protein resides in the membrane. May act as a catecholamine-responsive trans-membrane electron transporter. In Arabidopsis thaliana (Mouse-ear cress), this protein is Cytochrome b561 and DOMON domain-containing protein At3g61750.